The chain runs to 134 residues: Small ribosomal subunit protein uS8c (134 aa).

It belongs to the universal ribosomal protein uS8 family. Part of the 30S ribosomal subunit.

It is found in the plastid. It localises to the chloroplast. One of the primary rRNA binding proteins, it binds directly to 16S rRNA central domain where it helps coordinate assembly of the platform of the 30S subunit. The polypeptide is Small ribosomal subunit protein uS8c (rps8) (Helianthus annuus (Common sunflower)).